The chain runs to 316 residues: Short-chain dehydrogenase/reductase family 16C member 6 (316 aa).

Residue 40–64 participates in NAD(+) binding; it reads LITGAASGLGRLLAIKFASLGAILV. Substrate is bound at residue serine 173. Tyrosine 186 functions as the Proton acceptor in the catalytic mechanism.

This sequence belongs to the short-chain dehydrogenases/reductases (SDR) family.

This is Short-chain dehydrogenase/reductase family 16C member 6 (SDR16C6) from Bos taurus (Bovine).